The chain runs to 144 residues: Large ribosomal subunit protein uL11 (144 aa).

It belongs to the universal ribosomal protein uL11 family. As to quaternary structure, part of the ribosomal stalk of the 50S ribosomal subunit. Interacts with L10 and the large rRNA to form the base of the stalk. L10 forms an elongated spine to which L12 dimers bind in a sequential fashion forming a multimeric L10(L12)X complex. One or more lysine residues are methylated.

Functionally, forms part of the ribosomal stalk which helps the ribosome interact with GTP-bound translation factors. This chain is Large ribosomal subunit protein uL11, found in Streptomyces avermitilis (strain ATCC 31267 / DSM 46492 / JCM 5070 / NBRC 14893 / NCIMB 12804 / NRRL 8165 / MA-4680).